The sequence spans 700 residues: Elongation factor G 2 (700 aa).

The tr-type G domain occupies 8-290 (ERYRNIGISA…AVLDFLPSPI (283 aa)). Residues 17–24 (AHIDAGKT), 88–92 (DTPGH), and 142–145 (NKMD) each bind GTP.

Belongs to the TRAFAC class translation factor GTPase superfamily. Classic translation factor GTPase family. EF-G/EF-2 subfamily.

The protein resides in the cytoplasm. Catalyzes the GTP-dependent ribosomal translocation step during translation elongation. During this step, the ribosome changes from the pre-translocational (PRE) to the post-translocational (POST) state as the newly formed A-site-bound peptidyl-tRNA and P-site-bound deacylated tRNA move to the P and E sites, respectively. Catalyzes the coordinated movement of the two tRNA molecules, the mRNA and conformational changes in the ribosome. The sequence is that of Elongation factor G 2 from Paraburkholderia xenovorans (strain LB400).